A 561-amino-acid polypeptide reads, in one-letter code: Type II methyltransferase M.BstVI (561 aa).

This sequence belongs to the N(4)/N(6)-methyltransferase family.

The catalysed reaction is a 2'-deoxyadenosine in DNA + S-adenosyl-L-methionine = an N(6)-methyl-2'-deoxyadenosine in DNA + S-adenosyl-L-homocysteine + H(+). Functionally, a gamma subtype methylase, recognizes the double-stranded sequence 5'-CTCGAG-3', methylates A-5 on both strands, and protects the DNA from cleavage by the BstVI endonuclease. In Geobacillus stearothermophilus (Bacillus stearothermophilus), this protein is Type II methyltransferase M.BstVI.